The primary structure comprises 723 residues: BBSome complex assembly protein BBS10 (723 aa).

Belongs to the TCP-1 chaperonin family. In terms of assembly, component of a complex composed at least of MKKS, BBS10, BBS12, TCP1, CCT2, CCT3, CCT4, CCT5 and CCT8.

It is found in the cell projection. The protein localises to the cilium. Its function is as follows. Probable molecular chaperone that assists the folding of proteins upon ATP hydrolysis. Plays a role in the assembly of BBSome, a complex involved in ciliogenesis regulating transports vesicles to the cilia. Involved in adipogenic differentiation. The sequence is that of BBSome complex assembly protein BBS10 (BBS10) from Homo sapiens (Human).